A 353-amino-acid chain; its full sequence is Protein RecA (353 aa).

67–74 (GPESSGKT) lines the ATP pocket. A disordered region spans residues 330-353 (SNPNSTPDFSVDDSEGVAETNEDF). The segment covering 339–353 (SVDDSEGVAETNEDF) has biased composition (acidic residues).

The protein belongs to the RecA family.

The protein resides in the cytoplasm. Can catalyze the hydrolysis of ATP in the presence of single-stranded DNA, the ATP-dependent uptake of single-stranded DNA by duplex DNA, and the ATP-dependent hybridization of homologous single-stranded DNAs. It interacts with LexA causing its activation and leading to its autocatalytic cleavage. The sequence is that of Protein RecA from Escherichia coli O157:H7 (strain EC4115 / EHEC).